A 383-amino-acid polypeptide reads, in one-letter code: Plant intracellular Ras-group-related LRR protein 8 (383 aa).

LRR repeat units lie at residues 56–79 (RQNI…SINL), 80–102 (ASIS…LVAR), 104–126 (LNLW…IGCL), 127–149 (SKLK…IEDC), 151–173 (SLEE…GFEL), 174–197 (TNLT…SYLT), 199–219 (LRVL…LENL), 221–244 (NLQV…VGLL), 245–268 (ISLV…GCLR), and 270–290 (IQKL…VVEQ). Residues 291–298 (GLEALKQY) carry the GVYW; degenerate motif.

This sequence belongs to the SHOC2 family. As to expression, widely expressed except flowers.

Functionally, leucine-rich repeat protein that likely mediates protein interactions, possibly in the context of signal transduction. In Arabidopsis thaliana (Mouse-ear cress), this protein is Plant intracellular Ras-group-related LRR protein 8 (PIRL8).